A 988-amino-acid polypeptide reads, in one-letter code: Fanconi-associated nuclease 1 (988 aa).

The interval 1–39 is disordered; the sequence is MESQTGRKSARRLSMTKKKSQSVCPIKERTSNGGAASIT. Basic residues predominate over residues 8–20; sequence KSARRLSMTKKKS. Residues 49 to 77 form a UBZ4-type zinc finger; it reads KLACPLCGKLVPRYKINEHIDSQCQNFLV. The Zn(2+) site is built by Cys52, Cys55, His67, and Cys72. 3 disordered regions span residues 87-115, 164-256, and 269-307; these read TKAP…TSPF, TRVS…NTTE, and SSIE…TTQE. Residues 89-98 show a composition bias toward polar residues; that stretch reads APSNSALASN. 2 stretches are compositionally biased toward basic and acidic residues: residues 99–111 and 167–182; these read NERE…KDAD and SDNE…RSQK. Over residues 183–195 the composition is skewed to polar residues; sequence ENCMNSLTFGSER. Residues 224-238 show a composition bias toward low complexity; it reads SDSSISSDVHTSSSS. Residues 272–283 show a composition bias toward basic and acidic residues; that stretch reads ERGDESKVKSDQ. Positions 284–303 are enriched in polar residues; sequence TEASSSAYDVPTSKSPIKSK. The stretch at 636 to 663 forms a coiled coil; sequence SRGVEILQRLKRYEDAVEQLRNLLSQSV. Glu805, Asp931, Glu946, and Val947 together coordinate Mn(2+). In terms of domain architecture, VRR-NUC spans 866-978; that stretch reads VETLQDLIAD…GADVEVCHVT (113 aa).

The protein belongs to the FAN1 family. As to quaternary structure, interacts with fancd2 (when monoubiquitinated). Mn(2+) serves as cofactor. Requires Mg(2+) as cofactor.

It is found in the nucleus. It carries out the reaction Hydrolytically removes 5'-nucleotides successively from the 3'-hydroxy termini of 3'-hydroxy-terminated oligonucleotides.. Its function is as follows. Nuclease required for the repair of DNA interstrand cross-links (ICL) recruited at sites of DNA damage by monoubiquitinated FANCD2. Specifically involved in repair of ICL-induced DNA breaks by being required for efficient homologous recombination, probably in the resolution of homologous recombination intermediates. Acts as a 5'-3' exonuclease that anchors at a cut end of DNA and cleaves DNA successively at every third nucleotide, allowing to excise an ICL from one strand through flanking incisions. Probably keeps excising with 3'-flap annealing until it reaches and unhooks the ICL. Acts at sites that have a 5'-terminal phosphate anchor at a nick or a 1- or 2-nucleotide flap and is augmented by a 3' flap. Also has endonuclease activity toward 5'-flaps. This chain is Fanconi-associated nuclease 1 (fan1), found in Danio rerio (Zebrafish).